A 93-amino-acid chain; its full sequence is Integration host factor subunit beta (93 aa).

The tract at residues 59–93 (RVGRNPKTGQSVSLDGKFVPHFKPGKELRDRVNDD) is disordered. Basic and acidic residues predominate over residues 82-93 (PGKELRDRVNDD).

This sequence belongs to the bacterial histone-like protein family. As to quaternary structure, heterodimer of an alpha and a beta chain.

In terms of biological role, this protein is one of the two subunits of integration host factor, a specific DNA-binding protein that functions in genetic recombination as well as in transcriptional and translational control. This is Integration host factor subunit beta from Stutzerimonas stutzeri (strain A1501) (Pseudomonas stutzeri).